The sequence spans 112 residues: Nucleoid-associated protein FTM_1023 (112 aa).

It belongs to the YbaB/EbfC family. Homodimer.

The protein resides in the cytoplasm. It is found in the nucleoid. Its function is as follows. Binds to DNA and alters its conformation. May be involved in regulation of gene expression, nucleoid organization and DNA protection. This chain is Nucleoid-associated protein FTM_1023, found in Francisella tularensis subsp. mediasiatica (strain FSC147).